The primary structure comprises 536 residues: Lariat debranching enzyme (536 aa).

Residues Cys8, His10, Asp39, and Asn84 each coordinate a divalent metal cation. Residues Ser124 to Arg154 are lariat recognition loop. Residues His174, His226, and His228 each contribute to the a divalent metal cation site. Positions Glu388–Lys536 are disordered. The segment covering Glu414 to Asn426 has biased composition (polar residues). Residues Ile430–Leu441 are compositionally biased toward acidic residues. The segment covering Glu484–Leu504 has biased composition (basic and acidic residues).

Belongs to the lariat debranching enzyme family. Requires Fe(2+) as cofactor. The cofactor is Zn(2+). Mn(2+) serves as cofactor.

The protein localises to the nucleus. With respect to regulation, active in presence of diverse metals including Fe(2+), Zn(2+), Mn(2+). Also activated by Ca(2+). Binds two metal cations in two adjacent alpha and beta metal-binding pockets. Cleaves the 2'-5' phosphodiester linkage at the branch point of excised lariat intron RNA and converts them into linear molecules that can be subsequently degraded, thereby facilitating ribonucleotide turnover. Linked to its role in pre-mRNA processing mechanism, may also participate in retrovirus replication and have an antiviral cell-intrinsic defense function. The protein is Lariat debranching enzyme (DBR1) of Gallus gallus (Chicken).